We begin with the raw amino-acid sequence, 91 residues long: Transcriptional repressor FrmR (91 aa).

It belongs to the FrmR/RcnR family. As to quaternary structure, homotetramer.

The protein localises to the cytoplasm. Functionally, formaldehyde sensor. In the absence of formaldehyde, mediates repression of the frmRAB operon. Acts by binding directly to the frmRAB promoter region. In the presence of formaldehyde, it dissociates from the frmRAB promoter region and allows expression of the formaldehyde detoxification system encoded by frmA and frmB. The sequence is that of Transcriptional repressor FrmR from Escherichia coli (strain UTI89 / UPEC).